The chain runs to 189 residues: UPF0301 protein RPR_01165 (189 aa).

Belongs to the UPF0301 (AlgH) family.

The chain is UPF0301 protein RPR_01165 from Rickettsia peacockii (strain Rustic).